We begin with the raw amino-acid sequence, 103 residues long: Cell division protein FtsB (103 aa).

The Cytoplasmic segment spans residues 1 to 3 (MGK). A helical transmembrane segment spans residues 4–21 (LTLLLLALLVWLQYSLWF). Topologically, residues 22 to 103 (GKNGIHDYSR…RAGGPAQNNR (82 aa)) are periplasmic. Positions 38 to 62 (VQQATNAKLKARNDQLFAEIDDLNG) form a coiled coil.

It belongs to the FtsB family. In terms of assembly, part of a complex composed of FtsB, FtsL and FtsQ.

The protein localises to the cell inner membrane. Functionally, essential cell division protein. May link together the upstream cell division proteins, which are predominantly cytoplasmic, with the downstream cell division proteins, which are predominantly periplasmic. The polypeptide is Cell division protein FtsB (Cronobacter sakazakii (strain ATCC BAA-894) (Enterobacter sakazakii)).